A 925-amino-acid chain; its full sequence is MITGLLKKVFGSRNERLIKQYRRTVAQINALEPKFEQLSDDELRGMTETFRQRHAGGESLEALLPEAFAVCREASKRVMKMRHFDVQLIGGMVLNDNKIAEMRTGEGKTLTATLAVYLNAITGQGVHVVTVNDYLAQRDAEWMGRLYNFLGLSVGVNLSQMPHDAKQAAYNSDITYGTNNEFGFDYLRDNMVYDPSQRVQRPLNYAIVDEVDSILIDEARTPLIISGQAENQTDLYQRMNGIPKLLERQIGEEKADGTGVEKPGDYYVDEKGHQVYLTEAGHEKAEEILSQQGLIGEGESLYAPQNITLMHHLYAALRAHSLFHRDQHYVVQNDEVVIVDEFTGRLMTGRRWSDGLHQAVEAKEGVTVQQENQTLATITFQNYFRMYNKLAGMTGTADTEAYEFQEIYGLEVVVIPTNRPAQRKDQQDQIYKTGKERYDAVVRDIRDCYERGQPVLVGTTSIETSEYLSGLLDREQLPHQVLNAKQHAREAEIVAQAGRPKMITIATNMAGRGTDIVLGGNVEKQSGFIEADPNLSDAEKAARIKQLEDEWHSLHEQVKAAGGLHIVGTERHESRRIDNQLRGRAGRQGDPGSSRFYLSLDDQLLRIFAGDRVRAIMERLKMPEGEPIEAGIVTRSIESAQRKVEGRNFDIRKQLLQYDDVANDQRKEIYKLRNDVLEAQDVGDMVTNLRESVLVELFRDHVPADTMEEQWNISGLETRLREDWGLEVPLAQTIEGAQSIEDEELLNLIMKAAAERYDGKVAMVGRESFAGFERSVMLQSIDTHWREHLAALDHLRQGIHLRGYAQKDPKQEYKRESFELFARLLDLIKNEVTRVTFNVQIQSPEELEQASEEIEEGLSHLENIQYKHDEFAEGREPVEEAPSPRTGAAMAAAELALAGMPKVGRNDPCPCGSGKKFKQCHGRLS.

ATP is bound by residues Gln-87, 105-109 (GEGKT), and Asp-515. Residues Cys-909, Cys-911, Cys-920, and His-921 each coordinate Zn(2+).

The protein belongs to the SecA family. Monomer and homodimer. Part of the essential Sec protein translocation apparatus which comprises SecA, SecYEG and auxiliary proteins SecDF-YajC and YidC. Zn(2+) serves as cofactor.

It is found in the cell inner membrane. The protein resides in the cytoplasm. The catalysed reaction is ATP + H2O + cellular proteinSide 1 = ADP + phosphate + cellular proteinSide 2.. Functionally, part of the Sec protein translocase complex. Interacts with the SecYEG preprotein conducting channel. Has a central role in coupling the hydrolysis of ATP to the transfer of proteins into and across the cell membrane, serving both as a receptor for the preprotein-SecB complex and as an ATP-driven molecular motor driving the stepwise translocation of polypeptide chains across the membrane. This is Protein translocase subunit SecA from Cupriavidus necator (strain ATCC 17699 / DSM 428 / KCTC 22496 / NCIMB 10442 / H16 / Stanier 337) (Ralstonia eutropha).